The sequence spans 313 residues: Ribosomal RNA small subunit methyltransferase H (313 aa).

Residues 35-37 (GGH), D55, F79, D100, and Q107 contribute to the S-adenosyl-L-methionine site.

It belongs to the methyltransferase superfamily. RsmH family.

Its subcellular location is the cytoplasm. The catalysed reaction is cytidine(1402) in 16S rRNA + S-adenosyl-L-methionine = N(4)-methylcytidine(1402) in 16S rRNA + S-adenosyl-L-homocysteine + H(+). Functionally, specifically methylates the N4 position of cytidine in position 1402 (C1402) of 16S rRNA. In Burkholderia ambifaria (strain MC40-6), this protein is Ribosomal RNA small subunit methyltransferase H.